We begin with the raw amino-acid sequence, 198 residues long: FMN-dependent NADH:quinone oxidoreductase (198 aa).

Serine 10 provides a ligand contact to FMN.

It belongs to the azoreductase type 1 family. As to quaternary structure, homodimer. FMN is required as a cofactor.

It catalyses the reaction 2 a quinone + NADH + H(+) = 2 a 1,4-benzosemiquinone + NAD(+). It carries out the reaction N,N-dimethyl-1,4-phenylenediamine + anthranilate + 2 NAD(+) = 2-(4-dimethylaminophenyl)diazenylbenzoate + 2 NADH + 2 H(+). In terms of biological role, quinone reductase that provides resistance to thiol-specific stress caused by electrophilic quinones. Functionally, also exhibits azoreductase activity. Catalyzes the reductive cleavage of the azo bond in aromatic azo compounds to the corresponding amines. The polypeptide is FMN-dependent NADH:quinone oxidoreductase (Paraburkholderia phymatum (strain DSM 17167 / CIP 108236 / LMG 21445 / STM815) (Burkholderia phymatum)).